The following is a 160-amino-acid chain: Small ribosomal subunit protein uS7 (160 aa).

It belongs to the universal ribosomal protein uS7 family. As to quaternary structure, part of the 30S ribosomal subunit. Contacts proteins S9 and S11.

Functionally, one of the primary rRNA binding proteins, it binds directly to 16S rRNA where it nucleates assembly of the head domain of the 30S subunit. Is located at the subunit interface close to the decoding center, probably blocks exit of the E-site tRNA. The polypeptide is Small ribosomal subunit protein uS7 (Ehrlichia canis (strain Jake)).